Here is a 234-residue protein sequence, read N- to C-terminus: Ribitol-5-phosphate cytidylyltransferase (234 aa).

CTP is bound by residues 7–10 and 79–85; these read LAGG and GSIVQKS.

Belongs to the IspD/TarI cytidylyltransferase family. TarI subfamily.

The catalysed reaction is D-ribitol 5-phosphate + CTP + H(+) = CDP-L-ribitol + diphosphate. Its pathway is cell wall biogenesis; poly(ribitol phosphate) teichoic acid biosynthesis. Functionally, catalyzes the transfer of the cytidylyl group of CTP to D-ribitol 5-phosphate. The chain is Ribitol-5-phosphate cytidylyltransferase from Lacticaseibacillus paracasei (strain ATCC 334 / BCRC 17002 / CCUG 31169 / CIP 107868 / KCTC 3260 / NRRL B-441) (Lactobacillus paracasei).